The primary structure comprises 473 residues: Bifunctional protein HldE (473 aa).

Positions 1–316 (MILPDFSLAR…AIAIHGQRAP (316 aa)) are ribokinase. 193–196 (NLSE) contributes to the ATP binding site. Asp262 is a catalytic residue. The segment at 342–473 (VTNGCFDLLH…TRIIEAIRNG (132 aa)) is cytidylyltransferase.

The protein in the N-terminal section; belongs to the carbohydrate kinase PfkB family. It in the C-terminal section; belongs to the cytidylyltransferase family. Homodimer.

The enzyme catalyses D-glycero-beta-D-manno-heptose 7-phosphate + ATP = D-glycero-beta-D-manno-heptose 1,7-bisphosphate + ADP + H(+). It carries out the reaction D-glycero-beta-D-manno-heptose 1-phosphate + ATP + H(+) = ADP-D-glycero-beta-D-manno-heptose + diphosphate. It functions in the pathway nucleotide-sugar biosynthesis; ADP-L-glycero-beta-D-manno-heptose biosynthesis; ADP-L-glycero-beta-D-manno-heptose from D-glycero-beta-D-manno-heptose 7-phosphate: step 1/4. Its pathway is nucleotide-sugar biosynthesis; ADP-L-glycero-beta-D-manno-heptose biosynthesis; ADP-L-glycero-beta-D-manno-heptose from D-glycero-beta-D-manno-heptose 7-phosphate: step 3/4. Catalyzes the phosphorylation of D-glycero-D-manno-heptose 7-phosphate at the C-1 position to selectively form D-glycero-beta-D-manno-heptose-1,7-bisphosphate. Functionally, catalyzes the ADP transfer from ATP to D-glycero-beta-D-manno-heptose 1-phosphate, yielding ADP-D-glycero-beta-D-manno-heptose. In Methylococcus capsulatus (strain ATCC 33009 / NCIMB 11132 / Bath), this protein is Bifunctional protein HldE.